Here is a 217-residue protein sequence, read N- to C-terminus: MDNARFEDQLAAGCRALGVTVAADLGPRLQRLMSELLKWNAKVNLTAITAPEEVLEKHFLDSLAVLPEVTGAATLLDLGAGAGFPGLPLKLALPALGVTLVDTVGKKVAFIKAAAASLGLQGVRGLHARAEGQPETEGIPRAEVLIARAFMDLPDWLALAPAYVEPGGRVVAMLGKPQTDAELAARAAERQLRVVSARAYRLPFSGAERQVAVFAKE.

S-adenosyl-L-methionine-binding positions include Gly79, Phe84, Ala130–Glu131, and Arg148.

It belongs to the methyltransferase superfamily. RNA methyltransferase RsmG family.

It localises to the cytoplasm. The enzyme catalyses guanosine(527) in 16S rRNA + S-adenosyl-L-methionine = N(7)-methylguanosine(527) in 16S rRNA + S-adenosyl-L-homocysteine. In terms of biological role, specifically methylates the N7 position of guanine in position 527 of 16S rRNA. The protein is Ribosomal RNA small subunit methyltransferase G of Myxococcus xanthus (strain DK1622).